We begin with the raw amino-acid sequence, 237 residues long: Phosphoribosylaminoimidazole-succinocarboxamide synthase (237 aa).

It belongs to the SAICAR synthetase family.

It carries out the reaction 5-amino-1-(5-phospho-D-ribosyl)imidazole-4-carboxylate + L-aspartate + ATP = (2S)-2-[5-amino-1-(5-phospho-beta-D-ribosyl)imidazole-4-carboxamido]succinate + ADP + phosphate + 2 H(+). The protein operates within purine metabolism; IMP biosynthesis via de novo pathway; 5-amino-1-(5-phospho-D-ribosyl)imidazole-4-carboxamide from 5-amino-1-(5-phospho-D-ribosyl)imidazole-4-carboxylate: step 1/2. The sequence is that of Phosphoribosylaminoimidazole-succinocarboxamide synthase from Enterococcus faecalis (strain ATCC 700802 / V583).